A 1799-amino-acid chain; its full sequence is Bromodomain and WD repeat-containing protein 3 (1799 aa).

WD repeat units lie at residues 170–209 (IKMH…IWAT), 213–251 (RLLA…VWCL), 255–297 (APVA…FWQW), 307–347 (RPVK…IYYL), 353–393 (EKIA…IWQY), 400–452 (SIVL…VWNS), 456–495 (QLLH…IWDL), and 502–542 (RNYF…LFGF). A Phosphoserine modification is found at Ser693. The tract at residues 766-912 (KKPSYPIQRN…KKKKGGLVSM (147 aa)) is disordered. Residues 784-794 (SLRRTQRKRQH) show a composition bias toward basic residues. Residues 795–816 (TYLTRSNIEHNSQASSQTSGVQ) show a composition bias toward polar residues. Positions 817-828 (EDSDSSSEEDET) are enriched in acidic residues. A compositionally biased stretch (low complexity) spans 845 to 858 (SESSSSDSSSEYSD). Positions 875-884 (RQATQKIYSS) are enriched in polar residues. Phosphoserine is present on residues Ser884 and Ser885. Basic residues predominate over residues 897–907 (KKPKQTKKKKG). In terms of domain architecture, Bromo 1 spans 1136-1243 (WGAHSRDEEC…DVLLRFIGDQ (108 aa)). 4 disordered regions span residues 1258 to 1291 (EDPD…KCRG), 1321 to 1366 (EPFR…IDTP), 1435 to 1482 (IQSQ…QNTS), and 1517 to 1723 (SPSS…AKRA). The segment covering 1260 to 1276 (PDSSDLEEDSEMVDLDS) has biased composition (acidic residues). Residues 1298–1427 (CNPDAWKKQC…ALFENHIKNI (130 aa)) enclose the Bromo 2 domain. Over residues 1333–1348 (PVQQQQEGESSQSVPP) the composition is skewed to low complexity. Over residues 1438-1450 (QKRRRPRYRKRLR) the composition is skewed to basic residues. Composition is skewed to low complexity over residues 1451–1463 (SSSS…RAPS) and 1517–1530 (SPSS…SGNS). Residues Ser1574 and Ser1576 each carry the phosphoserine modification. A compositionally biased stretch (basic and acidic residues) spans 1584 to 1596 (GEEKEMKETKEQV). Positions 1598-1623 (LSSSESGELGSSLSSESTSGSDSDSE) are enriched in low complexity. Basic and acidic residues predominate over residues 1624–1640 (STSRTDQDYVDGDHDYS). 2 stretches are compositionally biased toward basic residues: residues 1646–1663 (RPKR…RNWK) and 1681–1694 (RGGR…RGGR). Ser1760 is subject to Phosphoserine.

Functionally, plays a role in the regulation of cell morphology and cytoskeletal organization. Required in the control of cell shape. This is Bromodomain and WD repeat-containing protein 3 (Brwd3) from Mus musculus (Mouse).